The following is a 177-amino-acid chain: Large ribosomal subunit protein uL6 (177 aa).

Residues 151–177 (KRPPEPYKGKGVKYADEHIRRKEGKKS) form a disordered region. A compositionally biased stretch (basic and acidic residues) spans 152–177 (RPPEPYKGKGVKYADEHIRRKEGKKS).

Belongs to the universal ribosomal protein uL6 family. Part of the 50S ribosomal subunit.

Its function is as follows. This protein binds to the 23S rRNA, and is important in its secondary structure. It is located near the subunit interface in the base of the L7/L12 stalk, and near the tRNA binding site of the peptidyltransferase center. This Fusobacterium nucleatum subsp. nucleatum (strain ATCC 25586 / DSM 15643 / BCRC 10681 / CIP 101130 / JCM 8532 / KCTC 2640 / LMG 13131 / VPI 4355) protein is Large ribosomal subunit protein uL6.